A 709-amino-acid chain; its full sequence is Leucine-rich repeat-containing protein 4B (709 aa).

The first 38 residues, 1–38 (MAQAHIQGSPCPLLPPGRMSWPQGALLLLWLFSPPLRA), serve as a signal peptide directing secretion. Residues 50–88 (GGGSPPATSCPAACSCSNQASRVICTRRELAEVPASIPV) form the LRRNT domain. LRR repeat units lie at residues 89 to 110 (NTRY…TFKH), 113 to 134 (HLEI…AFNG), 137 to 158 (SLNT…AFEY), 161 to 182 (KLRE…AFNR), 185 to 207 (SLRR…AFEG), 210 to 231 (NLRY…TALV), 232 to 253 (RLEE…SFQG), 256 to 277 (SLRK…AFDD), and 280 to 301 (SLEE…LFTP). The LRRCT domain occupies 313–365 (NPWHCNCDVLWLSWWLKETVPSNTTCCARCHAPAGLKGRYIGELDQSHFTCYA). The Ig-like C2-type domain occupies 366–454 (PVIVEPPTDL…GNTTASATLN (89 aa)). N-linked (GlcNAc...) asparagine glycans are attached at residues Asn-376, Asn-402, Asn-424, Asn-427, and Asn-446. Cys-387 and Cys-438 are joined by a disulfide. The disordered stretch occupies residues 496-552 (TQPGEEAQQPRGTEKEPPGPTTDGAWGGGRPDAAAPASASTTAPAPRSSRPTEKAFT). Residues 528–544 (AAAPASASTTAPAPRSS) show a composition bias toward low complexity. Residues 575–595 (IIIGCFVAITFMAAVMLVAFY) form a helical membrane-spanning segment. Phosphoserine is present on Ser-689.

In terms of assembly, interacts with PTPRF. Interacts with DLG4. Post-translationally, N-glycosylated. O-glycosylated; contains sialic acid. As to expression, mainly expressed in the brain. Widespread distribution in various brain regions (at protein level). Detected both embryonically and postnatally with stronger expression in postnatal stages.

The protein localises to the membrane. Its subcellular location is the presynaptic cell membrane. Its function is as follows. Synaptic adhesion protein. Regulates the formation of excitatory synapses. The trans-synaptic adhesion between LRRC4B and PTPRF regulates the formation of excitatory synapses in a bidirectional manner. This Rattus norvegicus (Rat) protein is Leucine-rich repeat-containing protein 4B (Lrrc4b).